We begin with the raw amino-acid sequence, 448 residues long: Glucose-6-phosphate isomerase (448 aa).

Glutamate 290 serves as the catalytic Proton donor. Active-site residues include histidine 311 and lysine 425.

This sequence belongs to the GPI family.

The protein localises to the cytoplasm. The catalysed reaction is alpha-D-glucose 6-phosphate = beta-D-fructose 6-phosphate. The protein operates within carbohydrate biosynthesis; gluconeogenesis. Its pathway is carbohydrate degradation; glycolysis; D-glyceraldehyde 3-phosphate and glycerone phosphate from D-glucose: step 2/4. Its function is as follows. Catalyzes the reversible isomerization of glucose-6-phosphate to fructose-6-phosphate. This chain is Glucose-6-phosphate isomerase, found in Oceanobacillus iheyensis (strain DSM 14371 / CIP 107618 / JCM 11309 / KCTC 3954 / HTE831).